Consider the following 463-residue polypeptide: Cysteine--tRNA ligase (463 aa).

Residue C29 coordinates Zn(2+). The 'HIGH' region motif lies at 31-41; the sequence is PTVYDFAHIGN. 3 residues coordinate Zn(2+): C227, H252, and E256. The short motif at 285 to 289 is the 'KMSKS' region element; the sequence is KMSKS. Residue K288 coordinates ATP.

Belongs to the class-I aminoacyl-tRNA synthetase family. In terms of assembly, monomer. Zn(2+) serves as cofactor.

It localises to the cytoplasm. It carries out the reaction tRNA(Cys) + L-cysteine + ATP = L-cysteinyl-tRNA(Cys) + AMP + diphosphate. The protein is Cysteine--tRNA ligase of Rhodopseudomonas palustris (strain BisB5).